Here is a 532-residue protein sequence, read N- to C-terminus: MWKFAIHSQQPFCWQQLCNRRHLYVGNVQQQTHLELLDAAPTRSDDEWLQAKPYEKVPGPGTWQVLSYFLPGGKQYNTNLIQMNRRMREWYGDIYRFPGLMGKQDVIFTYNPNDFELTYRNEGVWPIRIGLESFTYYRKVHRPEVFGSIGGLVSEQGKDWAHIRNKVNPVQMRVQNVRQNLPQIDQISREFVDKLDTLRDPVTHILNDNFHEQLKMWAFESISFVALNTRMGLLSDRPDPNAARLAEHMTDFFNYSFKYDVQPSIWPYYKTPGFKKFLQTYDKITEITTAYIDEAIKRFEIEKDSGNECVLQQLLSLNKKVAVVMAMYMLMAGIDTTSSAFVTILYHLARNPHKQRQLHRERRRILPDSDEPLTPENTKNMPYLRACIKECMRITSITPGNFRIATKDLVLSGYRVPRGEGVLMGVLELSNSEKYFGQSGQFMPERWLKADTDPDVKACPAARSRNPFVYLAFGFGPRTCIGKRIAELEMETLLTRLLRRYQVSWLAEMPLQYESNIILSPHGIYVQVRAAC.

Residue Cys480 participates in heme binding.

Belongs to the cytochrome P450 family. The cofactor is heme.

The protein localises to the mitochondrion. Functionally, probably involved in steroid hormones biosynthesis. This is Cytochrome P450 12b1, mitochondrial (Cyp12b1) from Drosophila acanthoptera (Fruit fly).